We begin with the raw amino-acid sequence, 488 residues long: Transmembrane protein 39A (488 aa).

Asparagine 31 and asparagine 39 each carry an N-linked (GlcNAc...) asparagine glycan. The next 3 membrane-spanning stretches (helical) occupy residues 72 to 92 (GLLFEFLFFIYLLVALFIQYI), 110 to 130 (TSLNFHLIDYHLAAFITVMLA), and 155 to 175 (LITARLVLLTLCGWVFCWTLV). Asparagine 180 is a glycosylation site (N-linked (GlcNAc...) asparagine). A run of 5 helical transmembrane segments spans residues 182 to 202 (SVLNLLFLGYPFGVYVPLCCF), 287 to 307 (EVLFNSLFSAYYVAFLPLCFV), 319 to 339 (CEHLIMVWINAFVMLSTQLLP), 420 to 440 (LLNLLLIIEGSLVLYQLYSLL), and 446 to 466 (NHTLSIALILFCNYYVLFKLL).

Belongs to the TMEM39 family.

The protein localises to the endoplasmic reticulum membrane. Functionally, regulates autophagy by controlling the spatial distribution and levels of the intracellular phosphatidylinositol 4-phosphate (PtdIns(4)P) pools. Modulates (PtdIns(4)P) levels by regulating the ER-to-Golgi trafficking of the phosphatidylinositide phosphatase SACM1L. The polypeptide is Transmembrane protein 39A (tmem39a) (Xenopus tropicalis (Western clawed frog)).